The primary structure comprises 1567 residues: MASQPPQPPSGQPDTQYEEYQSEVITETTNRPTPAADVYEITPTNDVMDDRYEHEHDDYESGAMYETVRTWSPQSRPELVRIASVFSRIDSHPDVAPTTEDGGQLNRRDTLAGVKIGDPVLDPTKPEFDFYKWARMFTHVMEKEGIKRNRTGVMFRNLTVLGSGSAVQYQDTFLSPFAAPFRPGELCGKGRNPEKVILHDFNGAIREGELLMVLGRPGSGCSTFLKAICGELHGLQKKKESIIHYNGVSQHTFKKELRGEAVYSAEDEHHFPHLTVGQTLEFAAAARTPSKRVLGLSRKDFSTHLARVMMSVFGLSHTYNTKVGDDYVRGVSGGERKRVSIAEIALSGAPICCWDNSTRGLDSATALEFTKALKIGSQVGGITQCLAIYQASQAIYDIFDKVIVLYEGRQIFFGPTRIAKQYFEEMGWYCPPRQTTADFLTSVTNPKERIAKEGYENRVPRTAVEFERYWKQSQNNKLLLADMDRFEAEYPPEEGHLEKLRETHGQAQAKHTASKSPYRISVPMQVKLCTVRAYQRLWGDKSSTIATNISQIMMALIIGSLFFDTPQTTDGFFAKGSVIFFAILLNGLMSITEINGLCKATDPIVPNAQRPIVVKHVNFAFYHAYSEALAGIVADIPIKFLLALVFNIIIYFLGGLERSAAKFFIFFLFTFITILTMSAIFRTLAAATKTIPQALALAGVMILALVIYTGFTLQPSYMHPWFKWILYINPIAYAYEALLVNEVHGNRYRCATPIPPYGSGTNFACAVAGAVPGEMSVSGDAWVESSYDYSYAHIWRNLGILLGFLAFFYFVYLVVSELNLSSASSAEFLVFRRGHLPKNFQGSKDEEAAAGGVMYPNDPARLPPTNTNGAAGETAPGGSTVAVIPPQKDIFTWRNVTYDITIKGEPRRLLDNISGWVRPGTLTALMGVSGAGKTTLLDALAQRTTMGVITGDMLVNGRPLDSSFQRKTGYVQQQDLHLETTTVREALRFSADLRQPKSVSRKEKYEYVEDVIKMLSMEDFSEAVVGNPGEGLNVEQRKLLTIGVELAAKPQLLLFLDEPTSGLDSQSSWSIVTFLRKLADNGQAVLSTIHQPSGILFEQFDRLLFLAKGGRTVYFGDIGKNSETLLNYFETHGAEPCGPSENPAEYMLNVVGAGPSGKSKIDWPAVWKESEESRHVQQELDRIQSETSKRNEGHGQSAEKEPGEFAMPFTSQLYCVTTRVFQQYWRTPSYIWGKLLLGLTSALFIGFSFFLQNSSMAGLQNSLFSIFMLTTIFSSLVQQIMPRFVTQRDLFEVRERPSRAYSWKVFLLANIIVEIPYQILLGIIAWASLFYPTFGAHLSSERQGILLLYCVQFFIFASTFAQMIIAGLPDAETAGGIATTMFGLMVTFNGVLQKPNALPGFWRFMWRVSPITYTVGGLAATSLHSREVKCAQNELAIFDPPSGATCAQYLQKLVEAGAPGKLYNPMSTSQCQYCPLSSGDQFLGGSEIHWSDRWRNFGIGWAYIVFNIFATVALYYLIRVRKSSGRPNRIISVITYHLSQFGTYCRAFITGRKEKCPRKREQIGKIY.

Pro residues predominate over residues 1–11 (MASQPPQPPSG). The segment at 1 to 37 (MASQPPQPPSGQPDTQYEEYQSEVITETTNRPTPAAD) is disordered. Residues 22–32 (SEVITETTNRP) are compositionally biased toward polar residues. Asn-149, Asn-157, and Asn-356 each carry an N-linked (GlcNAc...) asparagine glycan. The region spanning 167–432 (VQYQDTFLSP…FEEMGWYCPP (266 aa)) is the ABC transporter 1 domain. 6 helical membrane passes run 543-563 (STIATNISQIMMALIIGSLFF), 571-591 (GFFAKGSVIFFAILLNGLMSI), 636-656 (IPIKFLLALVFNIIIYFLGGL), 661-681 (AKFFIFFLFTFITILTMSAIF), 691-711 (IPQALALAGVMILALVIYTGF), and 798-818 (LGILLGFLAFFYFVYLVVSEL). N-linked (GlcNAc...) asparagine glycosylation is found at Asn-819, Asn-895, and Asn-912. The region spanning 891 to 1134 (FTWRNVTYDI…LLNYFETHGA (244 aa)) is the ABC transporter 2 domain. Residue 927-934 (GVSGAGKT) coordinates ATP. The tract at residues 1172 to 1202 (ESRHVQQELDRIQSETSKRNEGHGQSAEKEP) is disordered. Residues 1231–1251 (IWGKLLLGLTSALFIGFSFFL) form a helical membrane-spanning segment. N-linked (GlcNAc...) asparagine glycosylation is present at Asn-1253. Helical transmembrane passes span 1257–1277 (AGLQNSLFSIFMLTTIFSSLV), 1305–1325 (VFLLANIIVEIPYQILLGIIA), 1345–1365 (ILLLYCVQFFIFASTFAQMII), 1372–1392 (ETAGGIATTMFGLMVTFNGVL), and 1498–1518 (GIGWAYIVFNIFATVALYYLI).

It belongs to the ABC transporter superfamily. ABCG family. PDR (TC 3.A.1.205) subfamily.

The protein resides in the cell membrane. It carries out the reaction voriconazole(in) + ATP + H2O = voriconazole(out) + ADP + phosphate + H(+). The catalysed reaction is fluconazole(in) + ATP + H2O = fluconazole(out) + ADP + phosphate + H(+). It catalyses the reaction (R)-miconazole(in) + ATP + H2O = (R)-miconazole(out) + ADP + phosphate + H(+). The enzyme catalyses (S)-miconazole(in) + ATP + H2O = (S)-miconazole(out) + ADP + phosphate + H(+). Its function is as follows. Pleiotropic ABC efflux transporter that may be involved in the modulation susceptibility to a wide range of unrelated cytotoxic compounds. The protein is ABC multidrug transporter MDR1 of Trichophyton equinum (strain ATCC MYA-4606 / CBS 127.97) (Horse ringworm fungus).